The primary structure comprises 687 residues: DnaJ protein ERDJ2A (687 aa).

Residues 1 to 8 (MAASEENS) lie on the Lumenal side of the membrane. A helical transmembrane segment spans residues 9 to 29 (ALFPIFILTIMAIPLVPYTMV). The Cytoplasmic portion of the chain corresponds to 30–65 (KLSGALSKKQRTIHCQCLECDRSGKYKRSLFKKISN). The chain crosses the membrane as a helical span at residues 66–86 (FSTWSNLTLVLLWVVMIFLIY). Over 87–190 (YTKNMSREAQ…FLLDIDGASG (104 aa)) the chain is Lumenal. The N-linked (GlcNAc...) asparagine glycan is linked to Asn90. The J domain occupies 99-164 (DPFSILGLEP…VSRENFEKYG (66 aa)). A helical membrane pass occupies residues 191–211 (GILLLWIVGVCILLPLVIAVI). The region spanning 205–603 (PLVIAVIYLS…IGCDKKQALK (399 aa)) is the SEC63 domain. At 212-687 (YLSRSSKYTG…SSEESGSEEE (476 aa)) the chain is on the cytoplasmic side. The segment at 619-687 (SDEGAIAEEG…SSEESGSEEE (69 aa)) is disordered. A compositionally biased stretch (acidic residues) spans 623 to 654 (AIAEEGMEEEDEIEEEDYDDDYESEYSEDEDE).

In terms of assembly, interacts with OEP61/TPR7. In terms of tissue distribution, expressed in leaves, flower buds and flowers.

It is found in the endoplasmic reticulum membrane. Required for integral membrane and secreted preprotein translocation across the endoplasmic reticulum membrane. This Arabidopsis thaliana (Mouse-ear cress) protein is DnaJ protein ERDJ2A (ERDJ2A).